The primary structure comprises 191 residues: Glycerol-3-phosphate acyltransferase (191 aa).

A run of 5 helical transmembrane segments spans residues tyrosine 3–threonine 23, threonine 51–valine 71, tyrosine 78–phenylalanine 98, valine 108–valine 128, and tyrosine 150–phenylalanine 170.

It belongs to the PlsY family. As to quaternary structure, probably interacts with PlsX.

The protein localises to the cell inner membrane. It carries out the reaction an acyl phosphate + sn-glycerol 3-phosphate = a 1-acyl-sn-glycero-3-phosphate + phosphate. Its pathway is lipid metabolism; phospholipid metabolism. Its function is as follows. Catalyzes the transfer of an acyl group from acyl-phosphate (acyl-PO(4)) to glycerol-3-phosphate (G3P) to form lysophosphatidic acid (LPA). This enzyme utilizes acyl-phosphate as fatty acyl donor, but not acyl-CoA or acyl-ACP. The sequence is that of Glycerol-3-phosphate acyltransferase from Pelagibacter ubique (strain HTCC1062).